We begin with the raw amino-acid sequence, 520 residues long: GMP synthase [glutamine-hydrolyzing] (520 aa).

In terms of domain architecture, Glutamine amidotransferase type-1 spans 12 to 205 (KIIVLDYGSQ…AISICGARGD (194 aa)). Catalysis depends on C89, which acts as the Nucleophile. Catalysis depends on residues H179 and E181. The 190-residue stretch at 206–395 (WSMDNFIDME…LGMPEEIVWR (190 aa)) folds into the GMPS ATP-PPase domain. ATP is bound at residue 233-239 (SGGVDSS).

As to quaternary structure, homodimer.

The enzyme catalyses XMP + L-glutamine + ATP + H2O = GMP + L-glutamate + AMP + diphosphate + 2 H(+). It participates in purine metabolism; GMP biosynthesis; GMP from XMP (L-Gln route): step 1/1. In terms of biological role, catalyzes the synthesis of GMP from XMP. The sequence is that of GMP synthase [glutamine-hydrolyzing] from Streptococcus pyogenes serotype M3 (strain SSI-1).